Consider the following 156-residue polypeptide: MNTVVKLNNIFSGLPKKKKTKVLGRGIGCGKGKTSGRGHKGQKARSGVSINGFEGGQQSIFTRLPKRGFNSLFKSKYSIVNLSTIQRLIDSKKIENVSAITKQVLFNLGVIPSIKEKIKILGDGKLNTAVAIEYDFISKSAGSQVTLLSSVSEDKV.

Residues 26 to 46 (GIGCGKGKTSGRGHKGQKARS) form a disordered region. Basic residues predominate over residues 34–43 (TSGRGHKGQK).

Belongs to the universal ribosomal protein uL15 family. In terms of assembly, part of the 50S ribosomal subunit.

Binds to the 23S rRNA. In Ehrlichia canis (strain Jake), this protein is Large ribosomal subunit protein uL15.